A 420-amino-acid polypeptide reads, in one-letter code: Interleukin-5 receptor subunit alpha (420 aa).

Positions 1 to 20 are cleaved as a signal peptide; the sequence is MIIVAHVLLILLGATEILQA. Over 21–342 the chain is Extracellular; that stretch reads DLLPDEKISL…NDEHKPLREW (322 aa). A Fibronectin type-III 1 domain is found at 32–123; it reads PPVNFTIKVT…ASAELHAPPG (92 aa). N35 and N131 each carry an N-linked (GlcNAc...) asparagine glycan. Intrachain disulfides connect C134–C155 and C182–C196. N-linked (GlcNAc...) asparagine glycans are attached at residues N216 and N244. The region spanning 241 to 334 is the Fibronectin type-III 2 domain; the sequence is PPLNVTAEIE…WSQPIYVGND (94 aa). The cysteines at positions 269 and 316 are disulfide-linked. Positions 322 to 326 match the WSXWS motif motif; sequence WSEWS. Residues 343-362 traverse the membrane as a helical segment; that stretch reads FVIVIMATICFILLILSLIC. Residues 363–420 lie on the Cytoplasmic side of the membrane; sequence KICHLWIKLFPPIPAPKSNIKDLFVTTNYEKAGSSETEIEVICYIEKPGVETLEDSVF. The short motif at 371–379 is the Box 1 motif element; that stretch reads LFPPIPAPK.

The protein belongs to the type I cytokine receptor family. Type 5 subfamily. In terms of assembly, interacts with IL5. Interacts with CSF2RB. Interacts with JAK2. Interacts with SDCBP. In terms of tissue distribution, expressed on eosinophils and basophils.

It localises to the membrane. In terms of biological role, cell surface receptor that plays an important role in the survival, differentiation, and chemotaxis of eosinophils. Acts by forming a heterodimeric receptor with CSF2RB subunit and subsequently binding to interleukin-5. In unstimulated conditions, interacts constitutively with JAK2. Heterodimeric receptor activation leads to JAK2 stimulation and subsequent activation of the JAK-STAT pathway. The polypeptide is Interleukin-5 receptor subunit alpha (IL5RA) (Homo sapiens (Human)).